The following is a 753-amino-acid chain: 5-methyltetrahydropteroyltriglutamate--homocysteine methyltransferase (753 aa).

5-methyltetrahydropteroyltri-L-glutamate is bound by residues 17-20 (RELK) and Lys-117. L-homocysteine is bound by residues 431-433 (IGS) and Glu-484. Residues 431-433 (IGS) and Glu-484 contribute to the L-methionine site. Residues 515–516 (RC) and Trp-561 contribute to the 5-methyltetrahydropteroyltri-L-glutamate site. Asp-599 is a binding site for L-homocysteine. Residue Asp-599 coordinates L-methionine. 5-methyltetrahydropteroyltri-L-glutamate is bound at residue Glu-605. 3 residues coordinate Zn(2+): His-641, Cys-643, and Glu-665. Residue His-694 is the Proton donor of the active site. Residue Cys-726 participates in Zn(2+) binding.

Belongs to the vitamin-B12 independent methionine synthase family. Requires Zn(2+) as cofactor.

It carries out the reaction 5-methyltetrahydropteroyltri-L-glutamate + L-homocysteine = tetrahydropteroyltri-L-glutamate + L-methionine. It functions in the pathway amino-acid biosynthesis; L-methionine biosynthesis via de novo pathway; L-methionine from L-homocysteine (MetE route): step 1/1. Functionally, catalyzes the transfer of a methyl group from 5-methyltetrahydrofolate to homocysteine resulting in methionine formation. The protein is 5-methyltetrahydropteroyltriglutamate--homocysteine methyltransferase of Shigella dysenteriae serotype 1 (strain Sd197).